The following is a 116-amino-acid chain: Large ribosomal subunit protein uL14m (116 aa).

It belongs to the universal ribosomal protein uL14 family.

The protein resides in the mitochondrion. The polypeptide is Large ribosomal subunit protein uL14m (RPL14) (Acanthamoeba polyphaga (Amoeba)).